Consider the following 248-residue polypeptide: Ubiquinone/menaquinone biosynthesis C-methyltransferase UbiE (248 aa).

Residues Ser68 and Asp92 each coordinate S-adenosyl-L-methionine.

It belongs to the class I-like SAM-binding methyltransferase superfamily. MenG/UbiE family.

It carries out the reaction a 2-demethylmenaquinol + S-adenosyl-L-methionine = a menaquinol + S-adenosyl-L-homocysteine + H(+). The catalysed reaction is a 2-methoxy-6-(all-trans-polyprenyl)benzene-1,4-diol + S-adenosyl-L-methionine = a 5-methoxy-2-methyl-3-(all-trans-polyprenyl)benzene-1,4-diol + S-adenosyl-L-homocysteine + H(+). The protein operates within quinol/quinone metabolism; menaquinone biosynthesis; menaquinol from 1,4-dihydroxy-2-naphthoate: step 2/2. It functions in the pathway cofactor biosynthesis; ubiquinone biosynthesis. Its function is as follows. Methyltransferase required for the conversion of demethylmenaquinol (DMKH2) to menaquinol (MKH2) and the conversion of 2-polyprenyl-6-methoxy-1,4-benzoquinol (DDMQH2) to 2-polyprenyl-3-methyl-6-methoxy-1,4-benzoquinol (DMQH2). In Rickettsia rickettsii (strain Iowa), this protein is Ubiquinone/menaquinone biosynthesis C-methyltransferase UbiE.